The chain runs to 274 residues: Large ribosomal subunit protein uL2cy (274 aa).

Disordered stretches follow at residues Met-1–Ser-20 and Asn-224–Lys-274.

This sequence belongs to the universal ribosomal protein uL2 family. In terms of assembly, part of the 50S ribosomal subunit.

It is found in the plastid. The protein resides in the chloroplast. In Populus alba (White poplar), this protein is Large ribosomal subunit protein uL2cy (rpl2-B).